A 347-amino-acid polypeptide reads, in one-letter code: DNA polymerase III subunit delta (347 aa).

The protein belongs to the DNA polymerase HolA subunit family. As to quaternary structure, component of the DNA clamp loading complex consisting of tau(3):delta(1):delta'(1). The DNA polymerase III holoenzyme complex contains at least 10 different subunits organized into 3 functionally essential subassemblies: the Pol III core, the beta sliding clamp processivity factor and the clamp-loading complex. The Pol III core (subunits alpha, epsilon and theta) contains the polymerase and the 3'-5' exonuclease proofreading activities. The polymerase is tethered to the template via the dimeric beta sliding clamp processivity factor. The DNA clamp-loading complex assembles the beta sliding clamp onto the primed template and plays a central role in the organization and communication at the replication fork.

It is found in the cytoplasm. The protein localises to the nucleoid. It carries out the reaction DNA(n) + a 2'-deoxyribonucleoside 5'-triphosphate = DNA(n+1) + diphosphate. Part of the beta sliding clamp loading complex, which hydrolyzes ATP to load the beta clamp onto primed DNA to form the DNA replication pre-initiation complex. DNA polymerase III is a complex, multichain enzyme responsible for most of the replicative synthesis in bacteria. This DNA polymerase also exhibits 3'-5' exonuclease activity. The delta subunit is the wrench that will open the beta subunit dimer. The DNA clamp loading complex (tau(3),delta,delta') is thought to load beta dimers onto DNA by binding ATP which alters the complex's conformation so it can bind beta sliding clamp dimers and open them at one interface. Primed DNA is recognized, ATP is hydrolyzed releasing the clamp loading complex and closing the beta sliding clamp ring around the primed DNA. The polypeptide is DNA polymerase III subunit delta (Bacillus subtilis (strain 168)).